The primary structure comprises 340 residues: Erlin-2 (340 aa).

Topologically, residues 1–3 (MAQ) are cytoplasmic. A helical membrane pass occupies residues 4-24 (LGAVVAVASSFFCASLFSAVH). Over 25-340 (KIEEGHIGVY…EPLEAPTKEN (316 aa)) the chain is Lumenal. N-linked (GlcNAc...) asparagine glycosylation occurs at Asn106. The interval 177–309 (EAIRRNYELM…DIPNMFMDSA (133 aa)) is interaction with ERLIN1. Position 267 is an N6-acetyllysine (Lys267).

It belongs to the band 7/mec-2 family. Forms a heteromeric complex with ERLIN1. In complex with ERLIN1, interacts with RNF170. Interacts with activated ITPR1, independently of the degree of ITPR1 polyubiquitination. Interacts with SCAP, INSIG1, SREBF1 and SREBF2 under cholesterol sufficiency conditions; indicative for an association with the SCAP-SREBP-INSIG complex. Probably part of an AMFR/gp78 and INSIG1-containing ubiquitin ligase complex involved in ERAD of HMGCR. Interacts with TMUB1; TMUB1 bridges the association with AMFR. Interacts with SYVN1 and RNF139. Interacts with TMEM259. Interacts with TMEM41B. In terms of processing, deubiquitinated by USP25; leading to stabilization.

Its subcellular location is the endoplasmic reticulum membrane. Functionally, component of the ERLIN1/ERLIN2 complex which mediates the endoplasmic reticulum-associated degradation (ERAD) of inositol 1,4,5-trisphosphate receptors (IP3Rs) such as ITPR1. Promotes sterol-accelerated ERAD of HMGCR probably implicating an AMFR/gp78-containing ubiquitin ligase complex. Involved in regulation of cellular cholesterol homeostasis by regulation the SREBP signaling pathway. May promote ER retention of the SCAP-SREBF complex. The chain is Erlin-2 (Erlin2) from Mus musculus (Mouse).